A 507-amino-acid chain; its full sequence is MGKAAAVGTAVVVAAAVGVAVVLARRRRRRDLELVEGAAAERKRKVAAVIEDVEHALSTPTALLRGISDAMVTEMERGLRGDSHAMVKMLITYVDNLPTGNEQGLFYALDLGGTNFRVLRVQLGGKEKRVVQQQYEEVSIPPHLMVGTSMELFDFIASALSKFVDTEGDDFHLPEGRQRELGFTFSFPVSQTSISSGTLIKWTKGFSINDAVGEDVVSELGKAMERQGLDMKIAALVNDTVGTLAGGRYADNSVVAAIILGTGTNAAYVENANAIPKWTGLLPRSGNMVINTEWGSFKSDKLPLSEFDKAMDFESLNPGEQIYEKLISGMYLGEIVRRILLKLAHDAALFGDVVPSKLEQPFVLRTPDMSAMHHDSSHDLKTVGAKLKDIVGVPDTSLEVRYITSHICDIVAERAARLAAAGIYGVLKKLGRDKMPKDGSKMPRTVIALDGGLYEHYKKFSSCLESTLTDLLGDDVSSSVVTKLANDGSGIGAALLAASHSQYAEID.

The chain crosses the membrane as a helical span at residues 4-24 (AAAVGTAVVVAAAVGVAVVLA). A Hexokinase domain is found at 44 to 498 (RKVAAVIEDV…SGIGAALLAA (455 aa)). The tract at residues 99–237 (TGNEQGLFYA…GLDMKIAALV (139 aa)) is hexokinase small subdomain. ADP-binding residues include Gly113, Thr114, and Asn115. Positions 203, 204, 238, and 239 each coordinate D-glucose. Residues 238-487 (NDTVGTLAGG…SSVVTKLAND (250 aa)) are hexokinase large subdomain. Residue Thr262 coordinates ADP. The D-glucose site is built by Asn265, Glu293, and Glu324. Gly452 provides a ligand contact to ADP.

The protein belongs to the hexokinase family. In terms of tissue distribution, expressed in roots, leaves, flowers, immature seeds, endosperm and seed coat.

Its subcellular location is the plastid. The protein resides in the chloroplast outer membrane. It carries out the reaction a D-hexose + ATP = a D-hexose 6-phosphate + ADP + H(+). The catalysed reaction is D-fructose + ATP = D-fructose 6-phosphate + ADP + H(+). The enzyme catalyses D-glucose + ATP = D-glucose 6-phosphate + ADP + H(+). It participates in carbohydrate metabolism; hexose metabolism. The protein operates within carbohydrate degradation; glycolysis; D-glyceraldehyde 3-phosphate and glycerone phosphate from D-glucose: step 1/4. Fructose and glucose phosphorylating enzyme. Functions as a glucose sensor for plant growth and photosynthesis. Is essential for pollen development, germination, and tube growth. Its activity is necessary for the starch utilization pathway during pollen germination and tube growth, as well as for starch biosynthesis during pollen maturation. The chain is Hexokinase-5 (HXK5) from Oryza sativa subsp. japonica (Rice).